The primary structure comprises 399 residues: Acetate kinase (399 aa).

Position 7 (Asn7) interacts with Mg(2+). Lys14 lines the ATP pocket. Arg91 is a binding site for substrate. Catalysis depends on Asp148, which acts as the Proton donor/acceptor. ATP-binding positions include 208 to 212 (HLGNG), 283 to 285 (DFR), and 331 to 335 (GLGEN). Residue Glu384 participates in Mg(2+) binding.

It belongs to the acetokinase family. Homodimer. Mg(2+) serves as cofactor. Requires Mn(2+) as cofactor.

It is found in the cytoplasm. It carries out the reaction acetate + ATP = acetyl phosphate + ADP. The protein operates within metabolic intermediate biosynthesis; acetyl-CoA biosynthesis; acetyl-CoA from acetate: step 1/2. Catalyzes the formation of acetyl phosphate from acetate and ATP. Can also catalyze the reverse reaction. This Desulfitobacterium hafniense (strain Y51) protein is Acetate kinase.